Here is a 269-residue protein sequence, read N- to C-terminus: Ribosomal RNA small subunit methyltransferase A (269 aa).

Residues N11, L13, G37, E57, D85, and N104 each contribute to the S-adenosyl-L-methionine site.

Belongs to the class I-like SAM-binding methyltransferase superfamily. rRNA adenine N(6)-methyltransferase family. RsmA subfamily.

It localises to the cytoplasm. It catalyses the reaction adenosine(1518)/adenosine(1519) in 16S rRNA + 4 S-adenosyl-L-methionine = N(6)-dimethyladenosine(1518)/N(6)-dimethyladenosine(1519) in 16S rRNA + 4 S-adenosyl-L-homocysteine + 4 H(+). Specifically dimethylates two adjacent adenosines (A1518 and A1519) in the loop of a conserved hairpin near the 3'-end of 16S rRNA in the 30S particle. May play a critical role in biogenesis of 30S subunits. This chain is Ribosomal RNA small subunit methyltransferase A, found in Campylobacter hominis (strain ATCC BAA-381 / DSM 21671 / CCUG 45161 / LMG 19568 / NCTC 13146 / CH001A).